Here is a 61-residue protein sequence, read N- to C-terminus: Large ribosomal subunit protein uL30 (61 aa).

The protein belongs to the universal ribosomal protein uL30 family. In terms of assembly, part of the 50S ribosomal subunit.

The protein is Large ribosomal subunit protein uL30 of Maricaulis maris (strain MCS10) (Caulobacter maris).